Here is a 95-residue protein sequence, read N- to C-terminus: Cell division protein FtsB (95 aa).

The Cytoplasmic portion of the chain corresponds to 1-3; sequence MRW. The chain crosses the membrane as a helical span at residues 4-21; it reads VLAGLTALLLWLQGLLWF. Topologically, residues 22–95 are periplasmic; the sequence is GEGGLNDVRG…QIIEREDDAR (74 aa). The stretch at 26-76 forms a coiled coil; it reads LNDVRGLSRSVEAQREEVDRLRQRNQALEAEVNDLKTGLEALEERARSELG.

Belongs to the FtsB family. Part of a complex composed of FtsB, FtsL and FtsQ.

The protein resides in the cell inner membrane. Essential cell division protein. May link together the upstream cell division proteins, which are predominantly cytoplasmic, with the downstream cell division proteins, which are predominantly periplasmic. This is Cell division protein FtsB from Alkalilimnicola ehrlichii (strain ATCC BAA-1101 / DSM 17681 / MLHE-1).